The sequence spans 843 residues: MKTKLWLLLVLLLSALIFSETTIVVHYHRYDGKYDGWNLWIWPVEPVSQEGKAYQFTGEDDFGKVAVVKLPMDLTKVGIIVRLNEWQAKDVAKDRFIEIKDGKAEVWILQGVEEIFYEKPDTSPRIFFAQARSNKVIEAFLTNPVDTKKKELFKVTVDGKEIPVSRVEKADPTDIDVTNYVRIVLSESLKEEDLRKDVELIIEGYKPARVIMMEILDDYYYDGELGAVYSPEKTIFRVWSPVSKWVKVLLFKNGEDTEPYQVVNMEYKGNGVWEAVVEGDLDGVFYLYQLENYGKIRTTVDPYSKAVYANSKKSAVVNLARTNPEGWENDRGPKIEGYEDAIIYEIHIADITGLENSGVKNKGLYLGLTEENTKGPGGVTTGLSHLVELGVTHVHILPFFDFYTGDELDKDFEKYYNWGYDPYLFMVPEGRYSTDPKNPHTRIREVKEMVKALHKHGIGVIMDMVFPHTYGIGELSAFDQTVPYYFYRIDKTGAYLNESGCGNVIASERPMMRKFIVDTVTYWVKEYHIDGFRFDQMGLIDKKTMLEVERALHKIDPTIILYGEPWGGWGAPIRFGKSDVAGTHVAAFNDEFRDAIRGSVFNPSVKGFVMGGYGKETKIKRGVVGSINYDGKLIKSFALDPEETINYAACHDNHTLWDKNYLAAKADKKKEWTEEELKNAQKLAGAILLTSQGVPFLHGGQDFCRTKNFNDNSYNAPISINGFDYERKLQFIDVFNYHKGLIKLRKEHPAFRLKNAEEIKKHLEFLPGGRRIVAFMLKDHAGGDPWKDIVVIYNGNLEKTTYKLPEGKWNVVVNSQKAGTEVIETVEGTIELDPLSAYVLYRE.

The signal sequence occupies residues 1–19; sequence MKTKLWLLLVLLLSALIFS. Asp-535 acts as the Nucleophile in catalysis. The active-site Proton donor is Glu-564.

This sequence belongs to the glycosyl hydrolase 13 family.

It carries out the reaction Hydrolysis of (1-&gt;6)-alpha-D-glucosidic linkages in pullulan, amylopectin and glycogen, and in the alpha- and beta-limit dextrins of amylopectin and glycogen.. The protein is Pullulanase (pulA) of Thermotoga maritima (strain ATCC 43589 / DSM 3109 / JCM 10099 / NBRC 100826 / MSB8).